A 310-amino-acid polypeptide reads, in one-letter code: MKLVFAGTPEVAVPALDALIASDRHEVAAVVTRPDAPAGRGRRLVASPVAERAQEAGIEVLKPAKPRDEEFLARLREIAPDCCPVVAYGALLPKVALDVPARGWVNLHFSLLPAWRGAAPVQHAVMAGDEVTGASTFLIEEGLDSGPVYGVLTEEVRPTDTSGDLLTRLAFAGAGLLAATMDGIEDGTLHAVPQPHEGVTLAPKITVEDAQVQWSAPALRVDRVVRGCTPAPGAWTVFRGERLKLIQATPVLDRTDLAPGELSAAKNNVYVGTGSHAVELLWVQPQGKKPMRGADWARGVRIAHGELLGP.

110 to 113 (SLLP) lines the (6S)-5,6,7,8-tetrahydrofolate pocket.

This sequence belongs to the Fmt family.

The catalysed reaction is L-methionyl-tRNA(fMet) + (6R)-10-formyltetrahydrofolate = N-formyl-L-methionyl-tRNA(fMet) + (6S)-5,6,7,8-tetrahydrofolate + H(+). In terms of biological role, attaches a formyl group to the free amino group of methionyl-tRNA(fMet). The formyl group appears to play a dual role in the initiator identity of N-formylmethionyl-tRNA by promoting its recognition by IF2 and preventing the misappropriation of this tRNA by the elongation apparatus. The polypeptide is Methionyl-tRNA formyltransferase (Streptomyces griseus subsp. griseus (strain JCM 4626 / CBS 651.72 / NBRC 13350 / KCC S-0626 / ISP 5235)).